We begin with the raw amino-acid sequence, 398 residues long: 1-deoxy-D-xylulose 5-phosphate reductoisomerase (398 aa).

Threonine 11, glycine 12, serine 13, isoleucine 14, and asparagine 125 together coordinate NADPH. Lysine 126 contacts 1-deoxy-D-xylulose 5-phosphate. Glutamate 127 provides a ligand contact to NADPH. Aspartate 151 contributes to the Mn(2+) binding site. 1-deoxy-D-xylulose 5-phosphate is bound by residues serine 152, glutamate 153, serine 186, and histidine 209. Glutamate 153 contacts Mn(2+). An NADPH-binding site is contributed by glycine 215. Residues serine 222, asparagine 227, lysine 228, and glutamate 231 each coordinate 1-deoxy-D-xylulose 5-phosphate. Residue glutamate 231 coordinates Mn(2+).

This sequence belongs to the DXR family. The cofactor is Mg(2+). Mn(2+) is required as a cofactor.

It catalyses the reaction 2-C-methyl-D-erythritol 4-phosphate + NADP(+) = 1-deoxy-D-xylulose 5-phosphate + NADPH + H(+). It participates in isoprenoid biosynthesis; isopentenyl diphosphate biosynthesis via DXP pathway; isopentenyl diphosphate from 1-deoxy-D-xylulose 5-phosphate: step 1/6. Its function is as follows. Catalyzes the NADPH-dependent rearrangement and reduction of 1-deoxy-D-xylulose-5-phosphate (DXP) to 2-C-methyl-D-erythritol 4-phosphate (MEP). The chain is 1-deoxy-D-xylulose 5-phosphate reductoisomerase from Acinetobacter baumannii (strain ATCC 17978 / DSM 105126 / CIP 53.77 / LMG 1025 / NCDC KC755 / 5377).